Reading from the N-terminus, the 209-residue chain is Ras-like protein (209 aa).

15 to 22 (GGGGEGKS) contributes to the GTP binding site. Positions 37 to 45 (YDPTIEESY) match the Effector region motif. GTP-binding positions include 62-66 (DTAGQ) and 121-124 (NKCD). S-palmitoyl cysteine attachment occurs at residues cysteine 202 and cysteine 203. Position 206 is a cysteine methyl ester (cysteine 206). Cysteine 206 carries S-geranylgeranyl cysteine lipidation. Residues 207-209 (IVM) constitute a propeptide, removed in mature form.

Belongs to the small GTPase superfamily. Ras family.

The protein resides in the cell membrane. It carries out the reaction GTP + H2O = GDP + phosphate + H(+). Alternates between an inactive form bound to GDP and an active form bound to GTP. Activated by a guanine nucleotide-exchange factor (GEF) and inactivated by a GTPase-activating protein (GAP). This is Ras-like protein from Laccaria bicolor (Bicoloured deceiver).